An 83-amino-acid polypeptide reads, in one-letter code: Aspergillic acid biosynthesis cluster protein F (83 aa).

It functions in the pathway secondary metabolite biosynthesis. Functionally, part of the gene cluster that mediates the biosynthesis of aspergillic acid, a hydroxamic acid-containing pyrazinone with aliphatic side chains that originates from leucine (Leu) and isoleucine (Ile). Aspergillic acid has antibiotic properties and was shown to be lethal to mice. The first step in the pathway is the production of deoxyaspergillic acid via a condensation between the Ile amine and the Leu carboxylic acid, followed by a reductive release from the protein forming the dipeptide aldehyde NH(2)-Leu-Ile-CHO, which could undergo an intermolecular cyclization resulting in a dihydropyrazinone. As the NRPS asaC lacks a condensation domain, it is improbable that it is responsible for condensation of Leu and Ile. One possibility is that asaC acts on a previously condensed dipeptide and functions as a Leu-Ile reductase to yield deoxyaspergillic acid. After asaC forms deoxyaspergillic acid, the cytochrome P450 asaD oxidizes the pyrazinone to the hydroxamic acid-containing bioactive metabolite aspergillic acid. The hydroxylase/desaturase asaB can then convert aspergillic acid to hydroxyaspergillic acid. Both aspergillic acid and hydroxyaspergillic acid can form complexes with iron producing ferriaspergillin analogs. This is Aspergillic acid biosynthesis cluster protein F from Aspergillus flavus (strain ATCC 200026 / FGSC A1120 / IAM 13836 / NRRL 3357 / JCM 12722 / SRRC 167).